The primary structure comprises 280 residues: Large ribosomal subunit protein uL2 (280 aa).

2 disordered regions span residues methionine 1 to threonine 25 and histidine 230 to glycine 280. Residues lysine 257–glycine 280 show a composition bias toward basic residues.

It belongs to the universal ribosomal protein uL2 family. As to quaternary structure, part of the 50S ribosomal subunit. Forms a bridge to the 30S subunit in the 70S ribosome.

One of the primary rRNA binding proteins. Required for association of the 30S and 50S subunits to form the 70S ribosome, for tRNA binding and peptide bond formation. It has been suggested to have peptidyltransferase activity; this is somewhat controversial. Makes several contacts with the 16S rRNA in the 70S ribosome. The sequence is that of Large ribosomal subunit protein uL2 from Gloeobacter violaceus (strain ATCC 29082 / PCC 7421).